Here is a 399-residue protein sequence, read N- to C-terminus: Beta-1,4-galactosyltransferase 1 (399 aa).

The Cytoplasmic portion of the chain corresponds to 1–24 (MRFREQFLGGSAAMPGATLQRACR). The chain crosses the membrane as a helical; Signal-anchor for type II membrane protein span at residues 25–44 (LLVAVCALHLGVTLVYYLSG). Over 45 to 399 (RDLSRLPQLV…QITVDIGTPR (355 aa)) the chain is Lumenal. Positions 61–113 (QGGTNGAAASKQPPGEQRPRGARPPPPLGVSPKPRPGLDSSPGAASGPGLKSN) are disordered. Over residues 82–95 (ARPPPPLGVSPKPR) the composition is skewed to pro residues. Asn-113 carries N-linked (GlcNAc...) asparagine glycosylation. Cys-131 and Cys-173 form a disulfide bridge. Residues 184 to 188 (PFRNR), 223 to 225 (FNR), 250 to 251 (VD), and Trp-311 contribute to the UDP-alpha-D-galactose site. Cys-244 and Cys-263 are joined by a disulfide. Position 251 (Asp-251) interacts with Mn(2+). 313–316 (GEDD) is an N-acetyl-D-glucosamine binding site. Residue His-344 participates in Mn(2+) binding. Residue 344–346 (HSR) coordinates UDP-alpha-D-galactose. An N-acetyl-D-glucosamine-binding site is contributed by Arg-356.

It belongs to the glycosyltransferase 7 family. In terms of assembly, homodimer; and heterodimer with alpha-lactalbumin to form lactose synthase. Interacts (via N-terminal cytoplasmic domain) with UBE2Q1 (via N-terminus); the interaction is direct. The cofactor is Mn(2+). In terms of processing, the soluble form derives from the membrane forms by proteolytic processing.

It localises to the golgi apparatus. Its subcellular location is the golgi stack membrane. The protein resides in the cell membrane. It is found in the cell surface. The protein localises to the cell projection. It localises to the filopodium. Its subcellular location is the secreted. It carries out the reaction D-glucose + UDP-alpha-D-galactose = lactose + UDP + H(+). The enzyme catalyses an N-acetyl-beta-D-glucosaminyl derivative + UDP-alpha-D-galactose = a beta-D-galactosyl-(1-&gt;4)-N-acetyl-beta-D-glucosaminyl derivative + UDP + H(+). It catalyses the reaction N-acetyl-D-glucosamine + UDP-alpha-D-galactose = beta-D-galactosyl-(1-&gt;4)-N-acetyl-D-glucosamine + UDP + H(+). The catalysed reaction is a beta-D-GlcNAc-(1-&gt;3)-beta-D-Gal-(1-&gt;4)-beta-D-Glc-(1&lt;-&gt;1)-Cer(d18:1(4E)) + UDP-alpha-D-galactose = a neolactoside nLc4Cer(d18:1(4E)) + UDP + H(+). It carries out the reaction a beta-D-glucosylceramide + UDP-alpha-D-galactose = a beta-D-galactosyl-(1-&gt;4)-beta-D-glucosyl-(1&lt;-&gt;1)-ceramide + UDP + H(+). The enzyme catalyses a neolactoside IV(3)-beta-GlcNAc-nLc4Cer + UDP-alpha-D-galactose = a neolactoside nLc6Cer + UDP + H(+). It functions in the pathway protein modification; protein glycosylation. In terms of biological role, the Golgi complex form catalyzes the production of lactose in the lactating mammary gland and could also be responsible for the synthesis of complex-type N-linked oligosaccharides in many glycoproteins as well as the carbohydrate moieties of glycolipids. Its function is as follows. The cell surface form functions as a recognition molecule during a variety of cell to cell and cell to matrix interactions, as those occurring during development and egg fertilization, by binding to specific oligosaccharide ligands on opposing cells or in the extracellular matrix. The secreted form is responsible for the synthesis of complex-type to N-linked oligosaccharides in many glycoproteins as well as the carbohydrate moieties of glycolipids. This is Beta-1,4-galactosyltransferase 1 from Mus musculus (Mouse).